Reading from the N-terminus, the 239-residue chain is MNQTPLRLLIHGASGRMGQALLRLAAEHPESLQIVAAVTGRAPAQRVVDGVPFFAASELPGAPAFDVAIDFSLPEGFDPLLALCVERGAGLVSGTTGISSSQRQALEAAAASIPLVWASNFSLGVAVLDELVERAAQALAGWDCDIVESHHTQKKDAPSGTALTLGAAAQRGGAEPHYASLRAGDIVGEHLVQFTGLGERIELVHRATNRDIFARGALFAARQLQGRAPGSYRVRDLLQ.

Residues 12–17 (GASGRM), 94–96 (GTT), and 118–121 (ASNF) contribute to the NAD(+) site. H150 serves as the catalytic Proton donor/acceptor. H151 serves as a coordination point for (S)-2,3,4,5-tetrahydrodipicolinate. The active-site Proton donor is the K154. 160–161 (GT) is a binding site for (S)-2,3,4,5-tetrahydrodipicolinate.

The protein belongs to the DapB family.

It localises to the cytoplasm. It catalyses the reaction (S)-2,3,4,5-tetrahydrodipicolinate + NAD(+) + H2O = (2S,4S)-4-hydroxy-2,3,4,5-tetrahydrodipicolinate + NADH + H(+). The catalysed reaction is (S)-2,3,4,5-tetrahydrodipicolinate + NADP(+) + H2O = (2S,4S)-4-hydroxy-2,3,4,5-tetrahydrodipicolinate + NADPH + H(+). The protein operates within amino-acid biosynthesis; L-lysine biosynthesis via DAP pathway; (S)-tetrahydrodipicolinate from L-aspartate: step 4/4. In terms of biological role, catalyzes the conversion of 4-hydroxy-tetrahydrodipicolinate (HTPA) to tetrahydrodipicolinate. This is 4-hydroxy-tetrahydrodipicolinate reductase from Stenotrophomonas maltophilia (strain R551-3).